The primary structure comprises 289 residues: 5'-adenylylsulfate reductase-like 7 (289 aa).

The N-terminal stretch at 1 to 23 (MNLWVSIFLVSAIAGSCLPSGFA) is a signal peptide. Residues 37–157 (SVIEQKCPRS…LIQFYKETTG (121 aa)) enclose the Thioredoxin domain. N-linked (GlcNAc...) asparagine glycosylation is found at Asn-132 and Asn-184. The chain crosses the membrane as a helical span at residues 198 to 218 (MVLALMFLSLKLAILIFPIMG).

It is found in the membrane. The protein is 5'-adenylylsulfate reductase-like 7 (APRL7) of Arabidopsis thaliana (Mouse-ear cress).